Consider the following 447-residue polypeptide: Phosphoglucosamine mutase (447 aa).

S106 functions as the Phosphoserine intermediate in the catalytic mechanism. The Mg(2+) site is built by S106, D245, D247, and D249. S106 is modified (phosphoserine).

It belongs to the phosphohexose mutase family. The cofactor is Mg(2+). Activated by phosphorylation.

It catalyses the reaction alpha-D-glucosamine 1-phosphate = D-glucosamine 6-phosphate. In terms of biological role, catalyzes the conversion of glucosamine-6-phosphate to glucosamine-1-phosphate. This is Phosphoglucosamine mutase from Cupriavidus metallidurans (strain ATCC 43123 / DSM 2839 / NBRC 102507 / CH34) (Ralstonia metallidurans).